We begin with the raw amino-acid sequence, 110 residues long: SOSS complex subunit C (110 aa).

It belongs to the SOSS-C family. As to quaternary structure, belongs to the multiprotein complex Integrator. Component of the SOSS complex, composed of soss-b (soss-b1/nabp2 or soss-b2/nabp1), soss-a/ints3 and soss-c/inip.

The protein localises to the nucleus. Functionally, component of the SOSS complex, a multiprotein complex that functions downstream of the MRN complex to promote DNA repair and G2/M checkpoint. The SOSS complex associates with single-stranded DNA at DNA lesions and influences diverse endpoints in the cellular DNA damage response including cell-cycle checkpoint activation, recombinational repair and maintenance of genomic stability. Required for efficient homologous recombination-dependent repair of double-strand breaks (DSBs). This chain is SOSS complex subunit C (inip), found in Xenopus laevis (African clawed frog).